A 216-amino-acid chain; its full sequence is Flagellar transcriptional regulator FlhC (216 aa).

Cysteine 137, cysteine 140, cysteine 157, and cysteine 160 together coordinate Zn(2+).

It belongs to the FlhC family. As to quaternary structure, heterohexamer composed of two FlhC and four FlhD subunits. Each FlhC binds a FlhD dimer, forming a heterotrimer, and a hexamer assembles by dimerization of two heterotrimers. Zn(2+) is required as a cofactor.

The protein resides in the cytoplasm. In terms of biological role, functions in complex with FlhD as a master transcriptional regulator that regulates transcription of several flagellar and non-flagellar operons by binding to their promoter region. Activates expression of class 2 flagellar genes, including fliA, which is a flagellum-specific sigma factor that turns on the class 3 genes. Also regulates genes whose products function in a variety of physiological pathways. This Paraburkholderia atlantica protein is Flagellar transcriptional regulator FlhC.